The sequence spans 659 residues: Fructose-1,6-bisphosphatase class 3 (659 aa).

The protein belongs to the FBPase class 3 family. The cofactor is Mn(2+).

The enzyme catalyses beta-D-fructose 1,6-bisphosphate + H2O = beta-D-fructose 6-phosphate + phosphate. It functions in the pathway carbohydrate biosynthesis; gluconeogenesis. This chain is Fructose-1,6-bisphosphatase class 3, found in Clostridium botulinum (strain Alaska E43 / Type E3).